A 122-amino-acid chain; its full sequence is Large ribosomal subunit protein bL17 (122 aa).

The protein belongs to the bacterial ribosomal protein bL17 family. Part of the 50S ribosomal subunit. Contacts protein L32.

This chain is Large ribosomal subunit protein bL17, found in Neisseria meningitidis serogroup C / serotype 2a (strain ATCC 700532 / DSM 15464 / FAM18).